Here is a 236-residue protein sequence, read N- to C-terminus: Phosphoribosylaminoimidazole-succinocarboxamide synthase (236 aa).

It belongs to the SAICAR synthetase family.

It carries out the reaction 5-amino-1-(5-phospho-D-ribosyl)imidazole-4-carboxylate + L-aspartate + ATP = (2S)-2-[5-amino-1-(5-phospho-beta-D-ribosyl)imidazole-4-carboxamido]succinate + ADP + phosphate + 2 H(+). It functions in the pathway purine metabolism; IMP biosynthesis via de novo pathway; 5-amino-1-(5-phospho-D-ribosyl)imidazole-4-carboxamide from 5-amino-1-(5-phospho-D-ribosyl)imidazole-4-carboxylate: step 1/2. The polypeptide is Phosphoribosylaminoimidazole-succinocarboxamide synthase (Pelodictyon phaeoclathratiforme (strain DSM 5477 / BU-1)).